A 176-amino-acid chain; its full sequence is 3-hydroxydecanoyl-[acyl-carrier-protein] dehydratase (176 aa).

Residue His-71 is part of the active site.

This sequence belongs to the thioester dehydratase family. FabA subfamily. In terms of assembly, homodimer.

The protein localises to the cytoplasm. The enzyme catalyses a (3R)-hydroxyacyl-[ACP] = a (2E)-enoyl-[ACP] + H2O. It carries out the reaction (3R)-hydroxydecanoyl-[ACP] = (2E)-decenoyl-[ACP] + H2O. It catalyses the reaction (2E)-decenoyl-[ACP] = (3Z)-decenoyl-[ACP]. Its pathway is lipid metabolism; fatty acid biosynthesis. Functionally, necessary for the introduction of cis unsaturation into fatty acids. Catalyzes the dehydration of (3R)-3-hydroxydecanoyl-ACP to E-(2)-decenoyl-ACP and then its isomerization to Z-(3)-decenoyl-ACP. Can catalyze the dehydratase reaction for beta-hydroxyacyl-ACPs with saturated chain lengths up to 16:0, being most active on intermediate chain length. The sequence is that of 3-hydroxydecanoyl-[acyl-carrier-protein] dehydratase from Rhodopseudomonas palustris (strain BisA53).